The sequence spans 32 residues: Secreted protein F2 (32 aa).

The protein localises to the secreted. This Globisporangium hypogynum (Pythium hypogynum) protein is Secreted protein F2.